Reading from the N-terminus, the 1098-residue chain is Beta-alanine-activating enzyme (1098 aa).

ATP-binding positions include 198–206 (TSGTTGIPK), aspartate 428, arginine 442, and lysine 527. Residues 553 to 630 (EDLWEKLQYL…EIYNHILQTV (78 aa)) form the Carrier domain. At serine 589 the chain carries O-(pantetheine 4'-phosphoryl)serine. Residues serine 649 and serine 724 each carry the phosphoserine modification.

It belongs to the ATP-dependent AMP-binding enzyme family. In terms of tissue distribution, ubiquitously expressed in adult tissues.

Its function is as follows. Covalently binds beta-alanine in an ATP-dependent manner to form a thioester bond with its phosphopantetheine group and transfers it to an, as yet, unknown acceptor. May be required for a post-translational protein modification or for post-transcriptional modification of an RNA. In Homo sapiens (Human), this protein is Beta-alanine-activating enzyme (AASDH).